The following is a 602-amino-acid chain: General amino-acid permease GAP1 (602 aa).

At 1-95 (MSNTSSYEKN…LKHHLKNRHL (95 aa)) the chain is on the cytoplasmic side. K76 participates in a covalent cross-link: Glycyl lysine isopeptide (Lys-Gly) (interchain with G-Cter in ubiquitin). A helical transmembrane segment spans residues 96-116 (QMIAIGGAIGTGLLVGSGTAL). Residues 117-121 (RTGGP) lie on the Extracellular side of the membrane. The chain crosses the membrane as a helical span at residues 122–142 (ASLLIGWGSTGTMIYAMVMAL). The Cytoplasmic segment spans residues 143–165 (GELAVIFPISGGFTTYATRFIDE). Residues 166–185 (SFGYANNFNYMLQWLVVLPL) traverse the membrane as a helical segment. Topologically, residues 186-204 (EIVSASITVNFWGTDPKYR) are extracellular. A helical transmembrane segment spans residues 205-224 (DGFVALFWLAIVIINMFGVK). At 225-237 (GYGEAEFVFSFIK) the chain is on the cytoplasmic side. Residues 238-256 (VITVVGFIILGIILNCGGG) form a helical membrane-spanning segment. Topologically, residues 257 to 280 (PTGGYIGGKYWHDPGAFAGDTPGA) are extracellular. The helical transmembrane segment at 281-298 (KFKGVCSVFVTAAFSFAG) threads the bilayer. Topologically, residues 299-321 (SELVGLAASESVEPRKSVPKAAK) are cytoplasmic. A helical transmembrane segment spans residues 322–342 (QVFWRITLFYILSLLMIGLLV). Over 343-376 (PYNDKSLIGASSVDAAASPFVIAIKTHGIKGLPS) the chain is Extracellular. The helical transmembrane segment at 377–396 (VVNVVILIAVLSVGNSAIYA) threads the bilayer. Residues 397 to 421 (CSRTMVALAEQRFLPEIFSYVDRKG) are Cytoplasmic-facing. A helical transmembrane segment spans residues 422–442 (RPLVGIAVTSAFGLIAFVAAS). The Extracellular portion of the chain corresponds to 443–451 (KKEGEVFNW). The chain crosses the membrane as a helical span at residues 452–472 (LLALSGLSSLFTWGGICICHI). The Cytoplasmic segment spans residues 473–491 (RFRKALAAQGRGLDELSFK). A helical transmembrane segment spans residues 492–510 (SPTGVWGSYWGLFMVIIMF). Over 511 to 529 (IAQFYVAVFPVGDSPSAEG) the chain is Extracellular. The helical transmembrane segment at 530–548 (FFEAYLSFPLVMVMYIGHK) threads the bilayer. The Cytoplasmic portion of the chain corresponds to 549–602 (IYKRNWKLFIPAEKMDIDTGRREVDLDLLKQEIAEEKAIMATKPRWYRIWNFWC).

This sequence belongs to the amino acid-polyamine-organocation (APC) superfamily. YAT (TC 2.A.3.10) family. Post-translationally, active permease is phosphorylated. The addition of glutamine causes rapid dephosphorylation and inactivation of the permease. Ubiquitination by RSP5 and the RSP5-associated proteins BUL1 and BUL2, leads the addition of poly-ubiquitin chains being specifically formed by linkage through the lysine 63 residue of ubiquitin and mediates ammonium-induced endocytosis and degradation in the vacuole.

Its subcellular location is the cell membrane. The protein localises to the endoplasmic reticulum membrane. In terms of biological role, general amino-acid permease involved in the uptake of all the naturally occurring L-amino-acids, related compounds such as ornithine and citrulline, some D-amino acids, toxic amino acid analogs such as azetidine-2-carboxylate, and the polyamines putrescine and spermidine. Senses its transport substrates to set an appropriate level of transporter activity at the cell surface. Required for FLO11 expression and invasive growth. The sequence is that of General amino-acid permease GAP1 from Saccharomyces cerevisiae (strain ATCC 204508 / S288c) (Baker's yeast).